The sequence spans 63 residues: Small ribosomal subunit protein eS31 (63 aa).

Zn(2+)-binding residues include Cys31, Cys34, Cys50, and Cys53.

Belongs to the eukaryotic ribosomal protein eS31 family. As to quaternary structure, part of the 30S ribosomal subunit. The cofactor is Zn(2+).

This Aeropyrum pernix (strain ATCC 700893 / DSM 11879 / JCM 9820 / NBRC 100138 / K1) protein is Small ribosomal subunit protein eS31 (rps27ae).